A 199-amino-acid polypeptide reads, in one-letter code: Holliday junction resolvase RecU (199 aa).

4 residues coordinate Mg(2+): threonine 82, aspartate 84, glutamate 97, and glutamine 116.

Belongs to the RecU family. The cofactor is Mg(2+).

The protein localises to the cytoplasm. It carries out the reaction Endonucleolytic cleavage at a junction such as a reciprocal single-stranded crossover between two homologous DNA duplexes (Holliday junction).. Its function is as follows. Endonuclease that resolves Holliday junction intermediates in genetic recombination. Cleaves mobile four-strand junctions by introducing symmetrical nicks in paired strands. Promotes annealing of linear ssDNA with homologous dsDNA. Required for DNA repair, homologous recombination and chromosome segregation. This Streptococcus agalactiae serotype Ia (strain ATCC 27591 / A909 / CDC SS700) protein is Holliday junction resolvase RecU.